An 88-amino-acid polypeptide reads, in one-letter code: Acylphosphatase (88 aa).

Residues 3-88 (AARFVVSGVV…VPPTEDFVTG (86 aa)) enclose the Acylphosphatase-like domain. Catalysis depends on residues Arg-18 and Asn-36.

Belongs to the acylphosphatase family.

It catalyses the reaction an acyl phosphate + H2O = a carboxylate + phosphate + H(+). This chain is Acylphosphatase (acyP), found in Xanthomonas euvesicatoria pv. vesicatoria (strain 85-10) (Xanthomonas campestris pv. vesicatoria).